Here is a 449-residue protein sequence, read N- to C-terminus: Glucose-6-phosphate isomerase (449 aa).

E291 functions as the Proton donor in the catalytic mechanism. Residues H312 and K426 contribute to the active site.

Belongs to the GPI family.

It localises to the cytoplasm. The enzyme catalyses alpha-D-glucose 6-phosphate = beta-D-fructose 6-phosphate. The protein operates within carbohydrate biosynthesis; gluconeogenesis. It participates in carbohydrate degradation; glycolysis; D-glyceraldehyde 3-phosphate and glycerone phosphate from D-glucose: step 2/4. Its function is as follows. Catalyzes the reversible isomerization of glucose-6-phosphate to fructose-6-phosphate. The sequence is that of Glucose-6-phosphate isomerase from Enterococcus faecalis (strain ATCC 700802 / V583).